Consider the following 381-residue polypeptide: Molybdenum import ATP-binding protein ModC (381 aa).

In terms of domain architecture, ABC transporter spans S5–D238. G37 to S44 contacts ATP. The region spanning N297–R367 is the Mop domain.

The protein belongs to the ABC transporter superfamily. Molybdate importer (TC 3.A.1.8) family. As to quaternary structure, the complex is composed of two ATP-binding proteins (ModC), two transmembrane proteins (ModB) and a solute-binding protein (ModA).

The protein localises to the cell inner membrane. The enzyme catalyses molybdate(out) + ATP + H2O = molybdate(in) + ADP + phosphate + H(+). Functionally, part of the ABC transporter complex ModABC involved in molybdenum import. Responsible for energy coupling to the transport system. This is Molybdenum import ATP-binding protein ModC from Rhodopseudomonas palustris (strain BisB18).